Reading from the N-terminus, the 119-residue chain is Large ribosomal subunit protein uL14 (119 aa).

Belongs to the universal ribosomal protein uL14 family. As to quaternary structure, part of the 50S ribosomal subunit. Forms a cluster with proteins L3 and L19. In the 70S ribosome, L14 and L19 interact and together make contacts with the 16S rRNA in bridges B5 and B8.

In terms of biological role, binds to 23S rRNA. Forms part of two intersubunit bridges in the 70S ribosome. This is Large ribosomal subunit protein uL14 from Ehrlichia ruminantium (strain Gardel).